Consider the following 219-residue polypeptide: Orotate phosphoribosyltransferase (219 aa).

5-phospho-alpha-D-ribose 1-diphosphate is bound at residue K26. 34 to 35 (FF) serves as a coordination point for orotate. Residues 72-73 (YK), R98, K99, K102, H104, and 124-132 (DDVITAGTA) each bind 5-phospho-alpha-D-ribose 1-diphosphate. Positions 128 and 156 each coordinate orotate.

It belongs to the purine/pyrimidine phosphoribosyltransferase family. PyrE subfamily. Homodimer. The cofactor is Mg(2+).

The catalysed reaction is orotidine 5'-phosphate + diphosphate = orotate + 5-phospho-alpha-D-ribose 1-diphosphate. It participates in pyrimidine metabolism; UMP biosynthesis via de novo pathway; UMP from orotate: step 1/2. Catalyzes the transfer of a ribosyl phosphate group from 5-phosphoribose 1-diphosphate to orotate, leading to the formation of orotidine monophosphate (OMP). The sequence is that of Orotate phosphoribosyltransferase from Xylella fastidiosa (strain M23).